Here is a 1402-residue protein sequence, read N- to C-terminus: Eukaryotic translation initiation factor 4 gamma 1 (1402 aa).

Disordered stretches follow at residues 1–123 (MSGA…SPEP) and 165–402 (HEPN…YEYK). 2 positions are modified to phosphothreonine: threonine 11 and threonine 27. Low complexity predominate over residues 53-64 (GPEHSPSESQPS). Residues 65 to 76 (SPSPTPSPPPIL) show a composition bias toward pro residues. Serine 120 carries the phosphoserine modification. Residues 238–251 (ASATPPAVPSATPA) are compositionally biased toward low complexity. Acidic residues predominate over residues 261 to 275 (QEEEGEEEEEEEEGE). Composition is skewed to basic and acidic residues over residues 280–290 (ESDKGGEDLHP) and 324–340 (KELN…DAFK). Residues 359–370 (PTPESEGSSGPS) show a composition bias toward low complexity. The span at 379 to 388 (WDAKEDKIHN) shows a compositional bias: basic and acidic residues. Threonine 452 is modified (phosphothreonine). 4 disordered regions span residues 476-517 (ANLG…PPKG), 536-563 (AEKA…GSKT), 600-636 (SKGS…ATTE), and 828-1028 (MAKG…KREA). A compositionally biased stretch (low complexity) spans 479-488 (GRPALSSRGP). Arginine 490 and arginine 499 each carry omega-N-methylarginine. Over residues 547-563 (TAADKDRGEEDADGSKT) the composition is skewed to basic and acidic residues. The 227-residue stretch at 567-793 (FRRVRSILNK…QDVLDLRQSN (227 aa)) folds into the MIF4G domain. Polar residues predominate over residues 602–621 (GSLTSSLRRPFQNPTSQWPS). Serine 832 is subject to Phosphoserine. Omega-N-methylarginine is present on residues arginine 836 and arginine 846. Phosphoserine is present on residues serine 881 and serine 896. Residues 892–913 (GGRLSWGKGSSGSGAKPSDAAS) are compositionally biased toward low complexity. Lysine 899 bears the N6-acetyllysine mark. The span at 918-937 (PATSTLNRFSALQQAVPTES) shows a compositional bias: polar residues. Residues serine 948 and serine 950 each carry the phosphoserine modification. Residues 949–981 (LSRERGGKAGEPRRRLERSERGGDRGDRLDRAR) are compositionally biased toward basic and acidic residues. At serine 988 the chain carries Phosphoserine; by PKC/PRKCA. The segment covering 989–1028 (FSKEVEERSRERPSQPEGLRKAASLTEDRDRGRDAAKREA) has biased composition (basic and acidic residues). Phosphoserine occurs at positions 990, 997, and 1012. Threonine 1014 is subject to Phosphothreonine. Residues serine 1034 and serine 1041 each carry the phosphoserine modification. The 123-residue stretch at 1044-1166 (ELEKKSKAII…PMGELFREIT (123 aa)) folds into the MI domain. The W2 domain occupies 1231-1401 (EESEAPGQRA…REVEEEESDH (171 aa)). Serine 1399 is subject to Phosphoserine.

It belongs to the eukaryotic initiation factor 4G family. In terms of assembly, eIF4F is a multi-subunit complex, the composition of which varies with external and internal environmental conditions. It is composed of at least EIF4A, EIF4E (cap-binding) and EIF4G1/EIF4G3. Interacts with eIF3 complex, mutually exclusive with EIF4A1 or EIF4A2, EIF4E and through its N-terminus with PABPC1. Interacts with EIF4E or with EIF1 (mutually exclusive) through a common binding site. Interacts through its C-terminus with the serine/threonine kinases MKNK1, and with MKNK2. Appears to act as a scaffold protein, holding these enzymes in place to phosphorylate EIF4E. Non-phosphorylated EIF4EBP1 competes with EIF4G1/EIF4G3 to interact with EIF4E; insulin stimulated MAP-kinase (MAPK1 and MAPK3) phosphorylation of EIF4EBP1 causes dissociation of the complex allowing EIF4G1/EIF4G3 to bind and consequent initiation of translation. EIF4G1/EIF4G3 interacts with PABPC1 to bring about circularization of the mRNA. Interacts with EIF4E3. Interacts with CIRBP and MIF4GD. Interacts with RBM4. Interacts with HNRNPD/AUF1; the interaction requires RNA. Interacts with DDX3X; the interaction requires RNA. Interacts with DAZAP2. Post-translationally, phosphorylated at multiple sites in vivo. Phosphorylation at Ser-988 by PRKCA induces binding to MKNK1.

It localises to the cytoplasm. The protein resides in the nucleus. It is found in the stress granule. Its function is as follows. Component of the protein complex eIF4F, which is involved in the recognition of the mRNA cap, ATP-dependent unwinding of 5'-terminal secondary structure and recruitment of mRNA to the ribosome. Exists in two complexes, either with EIF1 or with EIF4E (mutually exclusive). Together with EIF1, is required for leaky scanning, in particular for avoiding cap-proximal start codon. Together with EIF4E, antagonizes the scanning promoted by EIF1-EIF4G1 and locates the start codon (through a TISU element) without scanning. As a member of the eIF4F complex, required for endoplasmic reticulum stress-induced ATF4 mRNA translation. The sequence is that of Eukaryotic translation initiation factor 4 gamma 1 (EIF4G1) from Oryctolagus cuniculus (Rabbit).